A 550-amino-acid polypeptide reads, in one-letter code: Sterol O-acyltransferase 1 (550 aa).

At Met-1 the chain carries N-acetylmethionine. Residues 1–36 (MVGEEKMSLRNRLSKSRENPEEDEDQRKPAKESLEA) form a disordered region. Residues 1-138 (MVGEEKMSLR…LDELLEVDHI (138 aa)) are Cytoplasmic-facing. A Phosphoserine modification is found at Ser-8. Over residues 15 to 34 (KSRENPEEDEDQRKPAKESL) the composition is skewed to basic and acidic residues. Residue His-137 coordinates cholesterol. Residues 139–160 (RTIYHMFIALLILFILSTLVVD) form a helical membrane-spanning segment. Residues 161–180 (YIDEGRLVLEFSLLSYAFGK) lie on the Lumenal side of the membrane. A helical transmembrane segment spans residues 181-206 (FPTVVWTWWIMFLSTFSVPYFLFQRW). At 207–218 (ATGYSKSSHPLI) the chain is on the cytoplasmic side. The helical transmembrane segment at 219-244 (NSLFHGFLFMVFQIGILGFGPTYVVL) threads the bilayer. Topologically, residues 245–252 (AYTLPPAS) are lumenal. A helical transmembrane segment spans residues 253–276 (RFIIIFEQIRFVMKAHSFVRENVP). Over 277-319 (RVLNSAKEKSSTVPIPTVNQYLYFLFAPTLIYRDSYPRNPTVR) the chain is Cytoplasmic. Residues 320-352 (WGYVAMQFAQVFGCFFYVYYIFERLCAPLFRNI) form a helical membrane-spanning segment. The Lumenal segment spans residues 353-369 (KQEPFSARVLVLCVFNS). The helical transmembrane segment at 370–395 (ILPGVLILFLTFFAFLHCWLNAFAEM) threads the bilayer. Residues 396-443 (LRFGDRMFYKDWWNSTSYSNYYRTWNVVVHDWLYYYAYKDFLWFFSKR) are Cytoplasmic-facing. An FYXDWWN motif motif is present at residues 403-409 (FYKDWWN). 7 residues coordinate an acyl-CoA: Asn-415, Arg-418, Asn-421, His-425, Tyr-433, Lys-445, and Ser-456. Residues 444–468 (FKSAAMLAVFAVSAVVHEYALAVCL) traverse the membrane as a helical segment. His-460 is an active-site residue. Residues 469-474 (SFFYPV) lie on the Lumenal side of the membrane. A helical membrane pass occupies residues 475–490 (LFVLFMFFGMAFNFIV). Residues 491-496 (NDSRKK) lie on the Cytoplasmic side of the membrane. The helical transmembrane segment at 497–528 (PIWNVMMWTSLFLGNGVLLCFYSQEWYARQHC) threads the bilayer. Cys-528 and Cys-546 are joined by a disulfide. Over 529-550 (PLKNPTFLDYVRPRSWTCRYVF) the chain is Lumenal.

This sequence belongs to the membrane-bound acyltransferase family. Sterol o-acyltransferase subfamily. As to quaternary structure, may form homo- or heterodimers. Interacts with UBIAD1. In terms of tissue distribution, expressed in most tissues, but most strongly in the adrenal gland. Expressed more strongly in liver Kupffer cells than in hepatocytes.

The protein resides in the endoplasmic reticulum membrane. It carries out the reaction a sterol + a long-chain fatty acyl-CoA = a long-chain 3-hydroxysterol ester + CoA. It catalyses the reaction cholesterol + an acyl-CoA = a cholesterol ester + CoA. The catalysed reaction is cholesterol + (9Z)-octadecenoyl-CoA = cholesteryl (9Z-octadecenoate) + CoA. The enzyme catalyses cholesterol + hexadecanoyl-CoA = cholesteryl hexadecanoate + CoA. It carries out the reaction octadecanoyl-CoA + cholesterol = cholesteryl octadecanoate + CoA. It catalyses the reaction (9Z,12Z)-octadecadienoyl-CoA + cholesterol = cholesteryl (9Z,12Z)-octadecadienoate + CoA. The catalysed reaction is (5Z,8Z,11Z,14Z)-eicosatetraenoyl-CoA + cholesterol = cholesteryl (5Z,8Z,11Z,14Z)-eicosatetraenoate + CoA. The enzyme catalyses (9Z)-hexadecenoyl-CoA + cholesterol = cholesteryl (9Z)-hexadecenoate + CoA. It carries out the reaction (11Z)-octadecenoyl-CoA + cholesterol = cholesteryl (11Z)-octadecenoate + CoA. It catalyses the reaction (7Z)-octadecenoyl-CoA + cholesterol = cholesteryl (7Z)-octadecenoate + CoA. Catalyzes the formation of fatty acid-cholesterol esters, which are less soluble in membranes than cholesterol. Plays a role in lipoprotein assembly and dietary cholesterol absorption. Preferentially utilizes oleoyl-CoA ((9Z)-octadecenoyl-CoA) as a substrate: shows a higher activity towards an acyl-CoA substrate with a double bond at the delta-9 position (9Z) than towards saturated acyl-CoA or an unsaturated acyl-CoA with a double bond at the delta-7 (7Z) or delta-11 (11Z) positions. The chain is Sterol O-acyltransferase 1 (SOAT1) from Chlorocebus aethiops (Green monkey).